Reading from the N-terminus, the 593-residue chain is Regulatory protein NPR1 (593 aa).

Phosphoserine occurs at positions 11, 15, 55, and 59. Positions serine 65–proline 144 constitute a BTB domain. A C2HC NPR-type zinc finger spans residues valine 147–arginine 161. Zn(2+) is bound by residues cysteine 150 and cysteine 155. At cysteine 156 the chain carries S-nitrosocysteine. 2 residues coordinate Zn(2+): histidine 157 and cysteine 160. ANK repeat units follow at residues lysine 229 to leucine 258, lysine 265 to aspartate 295, cysteine 297 to histidine 324, arginine 328 to glutamate 357, and glutamate 361 to isoleucine 397. Positions isoleucine 345–leucine 348 match the SIM3, required fo binding to SUMO3 and subsequent sumoylation motif. The segment at histidine 387–threonine 525 is salicylic acid-binding core (SBC). Salicylate is bound at residue arginine 432. Residues lysine 537 to lysine 554 carry the Nuclear localization signal motif. The tract at residues leucine 563–arginine 593 is disordered. A compositionally biased stretch (low complexity) spans serine 566 to threonine 579. Positions arginine 583–arginine 593 are enriched in basic residues.

Belongs to the plant 'ANKYRIN-BTB/POZ' family. 'NPR1-like' subfamily. Homodimer. Oligomer of dimers in an uninduced quiescent state; disulfide-linked. Forms activated (i.e. sumoylated) homodimers and monomers upon systemic acquired resistance (SAR) induction. Interacts with TGA1, TGA3, TGA4, TGA5, TGA6, TGA7 and with reduced forms of TGA1 and TGA4. Activated homodimer binds two TGA3 dimers in the presence of DNA via its ANK 2 repeat (265-295), thus forming a TGA3(2)-NPR1(2)-TGA3(2) complex in which NPR1 serves as a transcription cofactor by bridging two transcription factor complexes in an enhanceosome. Interacts with NIMIN-1 and NIMIN-3 via its C-terminal region, and with NIMIN-2 via its N-terminal region. Interacts with SUMO3 but not with SUMO1 and SUMO2; this interaction is required for phosphorylation at Ser-11 and Ser-15, and triggers activation by sumoylation and subsequent degradation. Binds to NPR3 and NPR4; these interactions are promoted by association of salicylic acid (SA) with NPR3, but disrupted by SA association with NPR4, probably due to conformational changes. Binds to CUL3A, a core component of the cullin-RING ubiquitin ligases (CRL); this interaction requires NPR3 and NPR4. Interacts with NPR2 independently of SA. Binds to WRKY70 when unmodified (i.e. not sumoylated). Phosphorylation at Ser-55 and Ser-59 prevents sumoylation to ensure stability and quiescence. In terms of processing, phosphorylated at Ser-11 and Ser-15 in the nucleus; facilitates its recruitment to a cullin3-based ubiquitin ligase leading to polyubiquitination and subsequent CUL3/CSN-mediated degradation. This phosphorylation at Ser-11 and Ser-15 requires interaction with SUMO3, and promotes in turn activation by sumoylation and subsequent degradation. Post-translationally, ubiquitinated. Sumoylated by SUMO3 independently of an E3 ligase to activate defense gene expression by switching from association with WRKY transcriptional repressors (e.g. WRKY70) to TGA transcriptional activators (e.g. TGA3). Sumoylation is inhibited by phosphorylation at Ser-55 and Ser-59, but seems to promote phosphorylation at Ser-11 and Ser-15. Sumoylation also triggers degradation, making immune induction transient. In terms of processing, the Cys-82-SH group reacts with Cys-216-SH of the other subunit to form an intermolecular disulfide. This disulfide might subsequently be reduced upon systemic acquired resistance (SAR) induction. Post-translationally, S-nitrosylation at Cys-156 facilitates its oligomerization.

The protein localises to the cytoplasm. Its subcellular location is the nucleus. The protein resides in the nuclear body. It participates in protein modification; protein ubiquitination. In terms of biological role, salicylic acid (SA)-binding substrate-specific adapter of an E3 ubiquitin-protein ligase complex (CUL3-RBX1-BTB) which mediates the ubiquitination and subsequent proteasomal degradation of target proteins. Transcription cofactor that represses gene expression in the absence of salicylic acid (SA), when attached to negative cis-elements (W-box) with WRKY transcription factors (e.g. WRKY70), but stimulates gene expression upon activation by SA, when sumoylated and attached to positive cis-elements (as-1) with TGA transcription factors (e.g. TGA3), thus confering immunity through a series of gene regulations ending in a significant increase in antimicrobial and defense genes expression (e.g. PR-1 and PR-2). Binds to SA with low capacity; this leads to conformational changes. Key positive regulator of the SA-dependent signaling pathway that negatively regulates jasmonic acid (JA)-dependent signaling pathway. Controls the onset of systemic acquired resistance (SAR). Upon SAR induction, a biphasic change in cellular reduction potential occurs, resulting in reduction of the cytoplasmic oligomeric form to dimeric and monomeric forms, which accumulate in the nucleus and activate gene expression. Appears to control lesion expansion by acting as an inhibitor of programmed cell death (PCD) during effector-triggered immunity (ETI) that occurs in response to incompatible interaction with avirulent pathogenic bacteria (i.e. Pseudomonas syringae ES4326/avrRpt2) ending in a hypersensitive response (HR). Phosphorylated form is target of proteasome degradation. The sequence is that of Regulatory protein NPR1 from Arabidopsis thaliana (Mouse-ear cress).